We begin with the raw amino-acid sequence, 321 residues long: Glucokinase (321 aa).

Residue 8–13 participates in ATP binding; the sequence is ADIGGT.

The protein belongs to the bacterial glucokinase family.

It is found in the cytoplasm. It carries out the reaction D-glucose + ATP = D-glucose 6-phosphate + ADP + H(+). This is Glucokinase from Paramagnetospirillum magneticum (strain ATCC 700264 / AMB-1) (Magnetospirillum magneticum).